Consider the following 308-residue polypeptide: GTP-binding protein RAD (308 aa).

Positions 1–15 are enriched in gly residues; the sequence is MTLNGGSGASGSRGA. The interval 1–86 is disordered; it reads MTLNGGSGAS…SDSLSSGGSG (86 aa). R24 bears the Omega-N-methylarginine mark. S26 is subject to Phosphoserine. Positions 57-82 are enriched in low complexity; it reads ATTAAGTRTQGQRLDWPEGSSDSLSS. Residues 98–105 and 203–206 each bind GTP; these read GAPGVGKS and NKSD. Residues 278-297 are calmodulin-binding; the sequence is AKRFLGRIVARNSRKMAFRA.

Belongs to the small GTPase superfamily. RGK family. Interacts with Calmodulin preferentially in the inactive, GDP-bound form. Interacts with CAMK2D. Interacts with CACNB2; interaction may be involved in beta-adrenergic regulation of heart rate and contractile force. Interaction with CACNB2 regulates the trafficking of CACNA1C to the cell membrane. Post-translationally, phosphorylation at Ser-26, Ser-39, Ser-273 and Ser-301 may be involved in regulating inhibition of voltage-gated L-type Ca(2+) channels.

It is found in the cell membrane. Functionally, may regulate basal voltage-dependent L-type Ca(2+) currents and be required for beta-adrenergic augmentation of Ca(2+) influx in cardiomyocytes, thereby regulating increases in heart rate and contractile force. May play an important role in cardiac antiarrhythmia via the strong suppression of voltage-dependent L-type Ca(2+) currents. Regulates voltage-gated L-type calcium channel subunit alpha-1C trafficking to the cell membrane. Inhibits cardiac hypertrophy through the calmodulin-dependent kinase II (CaMKII) pathway. Inhibits phosphorylation and activation of CAMK2D. The sequence is that of GTP-binding protein RAD (Rrad) from Mus musculus (Mouse).